Reading from the N-terminus, the 362-residue chain is Serine/threonine-protein kinase SBK2 (362 aa).

Residues 1-11 show a composition bias toward basic and acidic residues; sequence MPGKQSEDRPM. Residues 1–20 are disordered; the sequence is MPGKQSEDRPMEVAAVEDGG. A Protein kinase domain is found at 62–330; it reads YEEVRPLGQG…IKSYLGQPWK (269 aa). Residues 68–76 and lysine 91 each bind ATP; that span reads LGQGRFGRV. Catalysis depends on aspartate 183, which acts as the Proton acceptor. The disordered stretch occupies residues 317–362; sequence PVSSIKSYLGQPWKQREEGAEELTKELREDGSRGGQEAAKGEQPAC. Basic and acidic residues predominate over residues 330 to 348; the sequence is KQREEGAEELTKELREDGS.

This sequence belongs to the protein kinase superfamily. Ser/Thr protein kinase family. STKL subfamily.

It catalyses the reaction L-seryl-[protein] + ATP = O-phospho-L-seryl-[protein] + ADP + H(+). It carries out the reaction L-threonyl-[protein] + ATP = O-phospho-L-threonyl-[protein] + ADP + H(+). This chain is Serine/threonine-protein kinase SBK2 (Sbk2), found in Rattus norvegicus (Rat).